Reading from the N-terminus, the 119-residue chain is Putative yippee-like protein Os10g0369500 (119 aa).

The region spanning 21–118 is the Yippee domain; it reads AVLKCRRCRV…LEKARMWKEA (98 aa). Cysteine 25, cysteine 28, cysteine 81, and cysteine 84 together coordinate Zn(2+).

Belongs to the yippee family.

In Oryza sativa subsp. japonica (Rice), this protein is Putative yippee-like protein Os10g0369500.